Consider the following 814-residue polypeptide: DNA ligase (814 aa).

NAD(+) contacts are provided by residues 46-50 (DAEYD), 95-96 (SL), and Glu129. The active-site N6-AMP-lysine intermediate is the Lys131. 4 residues coordinate NAD(+): Arg152, Glu189, Lys305, and Lys329. Zn(2+) is bound by residues Cys434, Cys437, Cys458, and Cys464. Residues 525–548 (LSAQRRSEGEPAPKKPTKKKGEEE) are disordered. The BRCT domain occupies 735 to 814 (TSAAAFAGKT…DDWLAMLAEA (80 aa)).

Belongs to the NAD-dependent DNA ligase family. LigA subfamily. Mg(2+) is required as a cofactor. Mn(2+) serves as cofactor.

It catalyses the reaction NAD(+) + (deoxyribonucleotide)n-3'-hydroxyl + 5'-phospho-(deoxyribonucleotide)m = (deoxyribonucleotide)n+m + AMP + beta-nicotinamide D-nucleotide.. Functionally, DNA ligase that catalyzes the formation of phosphodiester linkages between 5'-phosphoryl and 3'-hydroxyl groups in double-stranded DNA using NAD as a coenzyme and as the energy source for the reaction. It is essential for DNA replication and repair of damaged DNA. The polypeptide is DNA ligase (Methylorubrum extorquens (strain PA1) (Methylobacterium extorquens)).